The chain runs to 835 residues: MNKYPPLLTMLIIGIGSNAVAGDYFDPSLLATDIGNNDKLDLSLFSHPGGGVKGEREVSVYINDFFYKNVTLDFENGISGALEPIFPSGFFDNILASPYRSIKEKELISTADFLSLVPYGMVRFDQAIARVDISIPQAYLGRDAQMKSAPESWNQGVPALLIDYRLSGSKNKYNYGSSQNFYANAFLGFNLMGWRLRTTTNYMSYNSKDLYNKGERQGSFNFYNTYLEKDIGYLRSTLRLGELSTRGMILESFNFKGGKIYSNDEMLNDRLRSYTPTVRGIASSQAVVTIKQGGVVILQKNVPPGPFEINDFSLSGYSGDLYVNIKEADGSEHSFIQPFSTLPEMKREGVSGYEISLGHYNNSGATQYYNESPFLYASWSRGYRNGMTLYSETIQSRKYQLLGVGSTLSLGDFGAVSGDASLSRANKYDKIHSGQSYGLKYSKNKVDTGTTVTLATYRYSTKDFYSFNDFVSKNDSVQYVWDNRLKNRITLSLNQSLDDYGSLSLIASQQNYWTSDYVSRSFSLSHSFGWNDIFFSTSFSLDQKEGDNALRNNNKVFGFYSSIPLSKLIGKNESTYSTLSYNVTKINNQVRNTATLAGKVPGSMAQYRFSSGWANTEQSSNKALSVNWDGDLLDGSLGYTSSGKNRITDYSLSGSAILYPWRLAIGSDSVINGAAVVETEFISGIKVRQGGETSLLGTAIVTSMQPYTENRIDLDTQNIPDDLFISNASKKIVPEKGAVVPVKYNLFKGKQIVFSLKRYDGTPLPFGSVVSLVGSDSEITGIIDDAGRVYLAGIPSKGILHGAWGYNKSCEVSFNLNGKPSNNSNEIIEYEGVCK.

Positions 1-21 (MNKYPPLLTMLIIGIGSNAVA) are cleaved as a signal peptide. An intrachain disulfide couples Cys810 to Cys834.

Belongs to the fimbrial export usher family.

The protein resides in the cell outer membrane. Its function is as follows. Involved in the export and assembly of the 987P fimbriae subunits across the outer membrane. The polypeptide is Outer membrane usher protein FasD (fasD) (Escherichia coli).